The chain runs to 164 residues: Rhomboid-related protein 1 (164 aa).

The next 4 membrane-spanning stretches (helical) occupy residues 10–30, 32–52, 56–76, and 120–140; these read GFNALLQLMIGVPLEMVHGVL, ISLLYLAGVLAGSLTVSITDM, VVGGSGGVYALCSAHLANVVM, and PSFMAHLAGAVVGVSMGLTIL. Ser60 (nucleophile) is an active-site residue. His125 is a catalytic residue.

The protein belongs to the peptidase S54 family.

The protein localises to the membrane. The catalysed reaction is Cleaves type-1 transmembrane domains using a catalytic dyad composed of serine and histidine that are contributed by different transmembrane domains.. Functionally, may be involved in regulated intramembrane proteolysis and the subsequent release of functional polypeptides from their membrane anchors. The sequence is that of Rhomboid-related protein 1 (Rhbdl1) from Rattus norvegicus (Rat).